Reading from the N-terminus, the 268-residue chain is Zygote formation protein zyg1 (268 aa).

Its function is as follows. Plays an essential role in zygote formation by inducing sexual cell fusion. Overexpressing cells eventually formed many loose mounds, in which giant multinucleate cells were surrounded by normal-sized cells. This is Zygote formation protein zyg1 (zyg1) from Dictyostelium mucoroides (Slime mold).